The sequence spans 111 residues: Universal stress protein B (111 aa).

Helical transmembrane passes span methionine 1–arginine 21 and phenylalanine 90–tryptophan 110.

This sequence belongs to the universal stress protein B family.

It localises to the cell inner membrane. This Klebsiella pneumoniae (strain 342) protein is Universal stress protein B.